Here is a 904-residue protein sequence, read N- to C-terminus: Disintegrin and metalloproteinase domain-containing protein 22 (904 aa).

Positions 1–23 (MQAAAAASFWLLCVLGTCPLARC) are cleaved as a signal peptide. A propeptide spanning residues 24 to 223 (GRAGVASLKG…LKPRLKRRKR (200 aa)) is cleaved from the precursor. The Extracellular segment spans residues 24–734 (GRAGVASLKG…LSGNGVAGTN (711 aa)). Asn163 carries N-linked (GlcNAc...) asparagine glycosylation. Residues 237 to 436 (KYIELMIVND…GGGACLFNKP (200 aa)) form the Peptidase M12B domain. 17 disulfide bridges follow: Cys347-Cys431, Cys390-Cys415, Cys392-Cys399, Cys445-Cys475, Cys456-Cys472, Cys458-Cys464, Cys471-Cys492, Cys483-Cys489, Cys488-Cys514, Cys501-Cys521, Cys508-Cys540, Cys533-Cys545, Cys552-Cys603, Cys567-Cys633, Cys581-Cys591, Cys598-Cys661, and Cys655-Cys666. The Disintegrin domain occupies 442–529 (PPECGNGFIE…QCAPNVHKMD (88 aa)). Asn517 carries an N-linked (GlcNAc...) asparagine glycan. An N-linked (GlcNAc...) asparagine glycan is attached at Asn632. N-linked (GlcNAc...) asparagine glycosylation occurs at Asn673. An EGF-like domain is found at 673-710 (NFSTCSSSKAGTVCSGNGVCSNELKCVCNRHWTGADCG). Cystine bridges form between Cys677–Cys692, Cys686–Cys698, and Cys700–Cys709. Residues 735–755 (IIIGIIAGTILVLALILGITA) traverse the membrane as a helical segment. Residues 756–857 (WGYKNYREQR…RFRPRSNSTE (102 aa)) are Cytoplasmic-facing. The tract at residues 769–904 (QGDYVKKPGD…QSARLWETSI (136 aa)) is disordered. Residues 789–808 (GGSTNSASSSKKRSNGLSHS) are compositionally biased toward low complexity. Phosphoserine is present on residues Ser808, Lys817, and Ser832. A compositionally biased stretch (basic and acidic residues) spans 809-827 (WSERIPDTKHISDICENGR). A compositionally biased stretch (basic residues) spans 840–851 (NKKKIRGKRFRP). A phosphoserine mark is found at Ser855, Ser860, Ser864, Ser868, and Met882. Positions 860–875 (SPAKSPSSSTGSIASS) are enriched in low complexity.

As to quaternary structure, interacts with LGI1. Can bind to LGI4. Interacts with KCNA2, DLG2 and DLG4. Interacts with ADAM11. Interacts (via C-terminus) with YWHAB/14-3-3 beta. Interacts (via C-terminus) with YWHAZ/14-3-3 zeta. The precursor is cleaved by a furin endopeptidase. As to expression, detected in juxtaparanodal zones in the central nervous system and at nerve terminal plexuses of basket cells in the cerebellum (at protein level). Expressed at high levels in the brain. Strongly expressed in cerebellar granule cells and hippocampus. In spinal cord, expression is restricted to gray matter.

It is found in the cell membrane. Its subcellular location is the cell projection. The protein resides in the axon. Probable ligand for integrin in the brain. This is a non catalytic metalloprotease-like protein. Involved in regulation of cell adhesion and spreading and in inhibition of cell proliferation. Neuronal receptor for LGI1. This Mus musculus (Mouse) protein is Disintegrin and metalloproteinase domain-containing protein 22 (Adam22).